Reading from the N-terminus, the 479-residue chain is Polyadenylate-binding protein-interacting protein 1 (479 aa).

The disordered stretch occupies residues 1–114; that stretch reads MSDGFDRAPG…PQQNSESAMA (114 aa). Ser2 is subject to N-acetylalanine. The span at 11-33 shows a compositional bias: gly residues; the sequence is AGRGRSRGLGRGGGGPEGGGFPN. An Omega-N-methylarginine modification is found at Arg21. Over residues 45–69 the composition is skewed to pro residues; sequence PPQPKAPGFLQPPPLRQPRTTPPPG. Positions 98–111 are enriched in polar residues; sequence PSSQDKIPQQNSES. Residues 116–143 form a PABPC1-interacting motif-2 (PAM2) region; it reads PQVVVAPVLMSKLSVNAPEFYPSGYSSS. Positions 157–375 are PAIP1 middle domain (PAIP1M); the sequence is TLSEYVQDFL…LLKLVELRSS (219 aa). Residues 159–376 form the MIF4G domain; it reads SEYVQDFLNH…LKLVELRSSN (218 aa). Residues 435-455 are disordered; sequence DYEENGTDLSGAGDPYLDDID. The interval 440-479 is PABPC1-interacting motif-1 (PAM1); that stretch reads GTDLSGAGDPYLDDIDDEMDPEIEEAYEKFCLESERKRKQ.

As to quaternary structure, interacts with the RRM1-RRM2 and C-terminus regions of PABPC1 in a 1:1 stoichiometry. Interacts with EIF4A. In terms of assembly, (Microbial infection) Interacts (via PAIP1M) with human SARS coronaviruses SARS-COV and SARS-COV-2 NSP3 protein (via SARS-unique domain); the interaction increases binding affinity with PABPC1.

The protein localises to the cytoplasm. Acts as a coactivator in the regulation of translation initiation of poly(A)-containing mRNAs. Its stimulatory activity on translation is mediated via its action on PABPC1. Competes with PAIP2 for binding to PABPC1. Its association with EIF4A and PABPC1 may potentiate contacts between mRNA termini. May also be involved in translationally coupled mRNA turnover. Implicated with other RNA-binding proteins in the cytoplasmic deadenylation/translational and decay interplay of the FOS mRNA mediated by the major coding-region determinant of instability (mCRD) domain. In terms of biological role, (Microbial infection) Upon interaction with SARS coronavirus SARS-CoV NSP3 protein, plays an important role in viral protein synthesis. The polypeptide is Polyadenylate-binding protein-interacting protein 1 (Homo sapiens (Human)).